The sequence spans 477 residues: Aspartyl/glutamyl-tRNA(Asn/Gln) amidotransferase subunit B (477 aa).

It belongs to the GatB/GatE family. GatB subfamily. In terms of assembly, heterotrimer of A, B and C subunits.

The enzyme catalyses L-glutamyl-tRNA(Gln) + L-glutamine + ATP + H2O = L-glutaminyl-tRNA(Gln) + L-glutamate + ADP + phosphate + H(+). The catalysed reaction is L-aspartyl-tRNA(Asn) + L-glutamine + ATP + H2O = L-asparaginyl-tRNA(Asn) + L-glutamate + ADP + phosphate + 2 H(+). Its function is as follows. Allows the formation of correctly charged Asn-tRNA(Asn) or Gln-tRNA(Gln) through the transamidation of misacylated Asp-tRNA(Asn) or Glu-tRNA(Gln) in organisms which lack either or both of asparaginyl-tRNA or glutaminyl-tRNA synthetases. The reaction takes place in the presence of glutamine and ATP through an activated phospho-Asp-tRNA(Asn) or phospho-Glu-tRNA(Gln). The sequence is that of Aspartyl/glutamyl-tRNA(Asn/Gln) amidotransferase subunit B from Ureaplasma parvum serovar 3 (strain ATCC 27815 / 27 / NCTC 11736).